The following is a 643-amino-acid chain: 1-deoxy-D-xylulose-5-phosphate synthase (643 aa).

Residues His-72 and 113–115 (GHA) each bind thiamine diphosphate. Asp-144 serves as a coordination point for Mg(2+). Residues 145-146 (GA), Asn-174, Tyr-287, and Glu-370 each bind thiamine diphosphate. Asn-174 contributes to the Mg(2+) binding site.

Belongs to the transketolase family. DXPS subfamily. As to quaternary structure, homodimer. It depends on Mg(2+) as a cofactor. Requires thiamine diphosphate as cofactor.

The enzyme catalyses D-glyceraldehyde 3-phosphate + pyruvate + H(+) = 1-deoxy-D-xylulose 5-phosphate + CO2. It functions in the pathway metabolic intermediate biosynthesis; 1-deoxy-D-xylulose 5-phosphate biosynthesis; 1-deoxy-D-xylulose 5-phosphate from D-glyceraldehyde 3-phosphate and pyruvate: step 1/1. Functionally, catalyzes the acyloin condensation reaction between C atoms 2 and 3 of pyruvate and glyceraldehyde 3-phosphate to yield 1-deoxy-D-xylulose-5-phosphate (DXP). This is 1-deoxy-D-xylulose-5-phosphate synthase from Parasynechococcus marenigrum (strain WH8102).